We begin with the raw amino-acid sequence, 182 residues long: Oligoribonuclease (182 aa).

Residues 8–171 (LIWLDMEMTG…ADIHESIGEL (164 aa)) form the Exonuclease domain. Residue Tyr129 is part of the active site.

The protein belongs to the oligoribonuclease family.

It is found in the cytoplasm. Its function is as follows. 3'-to-5' exoribonuclease specific for small oligoribonucleotides. The protein is Oligoribonuclease of Azoarcus sp. (strain BH72).